The chain runs to 276 residues: MRRKNLTEVTEFVFLGFSRFHKHHITLFVVFLILYTLTVAGNAIIMTIICIDRHLHTPMYFFLSMLASSKTVYTLFIIPQMLSSFVTQTQPISLAGCTTQTFFFVTLAINNCFLLTVMGYDHYMAICNPLRYRVITSKKVCVQLVCGAFSIGLAMAAVQVTSIFTLPFCHTVVGHFFCDILPVMKLSCINTTINEIINFVVRLFVILVPMGLVFISYVLIISTVLKIASAEGWKKTFATCAFHLTVVIVHYGCASIAYLMPKSENSIEQDLLLSVT.

Over 1 to 25 the chain is Extracellular; that stretch reads MRRKNLTEVTEFVFLGFSRFHKHHI. N-linked (GlcNAc...) asparagine glycosylation occurs at N5. The chain crosses the membrane as a helical span at residues 26–46; it reads TLFVVFLILYTLTVAGNAIIM. Residues 47–54 lie on the Cytoplasmic side of the membrane; the sequence is TIICIDRH. Residues 55 to 75 traverse the membrane as a helical segment; it reads LHTPMYFFLSMLASSKTVYTL. Residues 76–99 lie on the Extracellular side of the membrane; that stretch reads FIIPQMLSSFVTQTQPISLAGCTT. C97 and C188 are disulfide-bonded. A helical membrane pass occupies residues 100 to 120; the sequence is QTFFFVTLAINNCFLLTVMGY. Residues 121–139 are Cytoplasmic-facing; it reads DHYMAICNPLRYRVITSKK. A helical membrane pass occupies residues 140–160; the sequence is VCVQLVCGAFSIGLAMAAVQV. The Extracellular segment spans residues 161 to 196; the sequence is TSIFTLPFCHTVVGHFFCDILPVMKLSCINTTINEI. N-linked (GlcNAc...) asparagine glycosylation occurs at N190. Residues 197–216 form a helical membrane-spanning segment; sequence INFVVRLFVILVPMGLVFIS. The Cytoplasmic segment spans residues 217 to 236; it reads YVLIISTVLKIASAEGWKKT. A helical membrane pass occupies residues 237 to 257; sequence FATCAFHLTVVIVHYGCASIA. The Extracellular segment spans residues 258–270; it reads YLMPKSENSIEQD. The helical transmembrane segment at 271 to 276 threads the bilayer; it reads LLLSVT.

This sequence belongs to the G-protein coupled receptor 1 family.

The protein resides in the cell membrane. Functionally, odorant receptor. This is Putative olfactory receptor 10J6 (OR10J6P) from Homo sapiens (Human).